We begin with the raw amino-acid sequence, 614 residues long: Phragmoplastin DRP1C (614 aa).

The 270-residue stretch at 32–301 folds into the Dynamin-type G domain; the sequence is WEALPTVAVV…LETVIRQKIP (270 aa). Residues 42 to 49 are G1 motif; it reads GGQSSGKS. 45–50 provides a ligand contact to GTP; the sequence is SSGKSS. The interval 68 to 70 is G2 motif; it reads VTR. Residues 143 to 146 are G3 motif; the sequence is DLPG. The G4 motif stretch occupies residues 212–215; that stretch reads TKLD. GTP-binding positions include 213-218 and 243-246; these read KLDIMD and NRSQ. The segment at 242 to 245 is G5 motif; sequence VNRS. The disordered stretch occupies residues 499 to 519; the sequence is EPEKEKPNPRNAPAPNADPYS. Over residues 507-517 the composition is skewed to low complexity; it reads PRNAPAPNADP. Positions 523-614 constitute a GED domain; sequence FRKIGSNVSA…RDDIDAVAWK (92 aa).

Belongs to the TRAFAC class dynamin-like GTPase superfamily. Dynamin/Fzo/YdjA family. Forms homodimer and may homooligomerize and heterooligomerize to form the phragmoplastin complex. Binds to PHIP1. As to expression, ubiquitous.

The protein localises to the cytoplasm. It is found in the cytoskeleton. The protein resides in the cell cortex. Its subcellular location is the cytoplasmic vesicle. It localises to the clathrin-coated vesicle. The protein localises to the phragmoplast. The catalysed reaction is GTP + H2O = GDP + phosphate + H(+). Functionally, microtubule-associated force-producing protein that is targeted to the growing edges of the cell plate during cytokinesis. Also plays a major role in plasma membrane maintenance during pollen maturation. Has a GTPase activity. This is Phragmoplastin DRP1C from Arabidopsis thaliana (Mouse-ear cress).